The following is a 180-amino-acid chain: MGIPVGKSMLVLLISLAFALCCIAAYGPGETLCGGELVDTLQFVCSDRGFYFSRPSSRANRRSRGIVEECCFRSCDLALLETYCATPAKSERDVSTSQAVLPDDFPRYPVGKFFQYDTWRQSAGRLRRGLPALLRARRGRMLAKELKEFREAKRHRPLIVLPPKDPAHGGASSEMSSNHQ.

An N-terminal signal peptide occupies residues 1-24; the sequence is MGIPVGKSMLVLLISLAFALCCIA. The tract at residues 25 to 52 is b; that stretch reads AYGPGETLCGGELVDTLQFVCSDRGFYF. 3 disulfides stabilise this stretch: C33–C71, C45–C84, and C70–C75. Residues 53-64 are c; that stretch reads SRPSSRANRRSR. The segment at 65-85 is a; the sequence is GIVEECCFRSCDLALLETYCA. Residues 86–91 form a d region; it reads TPAKSE. Positions 92-180 are cleaved as a propeptide — e peptide; sequence RDVSTSQAVL…ASSEMSSNHQ (89 aa). The segment at 157–180 is disordered; the sequence is PLIVLPPKDPAHGGASSEMSSNHQ.

Belongs to the insulin family. As to quaternary structure, interacts with MYORG; this interaction is required for IGF2 secretion. Interacts with integrins ITGAV:ITGB3 and ITGA6:ITGB4; integrin-binding is required for IGF2 signaling. Interacts with IGFBP2. In terms of processing, proteolytically processed by PCSK4, proIGF2 is cleaved at Arg-128 and Arg-92 to generate big-IGF2 and mature IGF2. As to expression, expressed in the heart, blood serum, kidney and skeletal muscle including the tibialis anterior muscle.

Its subcellular location is the secreted. The insulin-like growth factors possess growth-promoting activity. Major fetal growth hormone in mammals. Plays a key role in regulating fetoplacental development. IGF2 is influenced by placental lactogen. Also involved in tissue differentiation. In adults, involved in glucose metabolism in adipose tissue, skeletal muscle and liver. Acts as a ligand for integrin which is required for IGF2 signaling. Positively regulates myogenic transcription factor MYOD1 function by facilitating the recruitment of transcriptional coactivators, thereby controlling muscle terminal differentiation. Inhibits myoblast differentiation and modulates metabolism via increasing the mitochondrial respiration rate. Functionally, preptin undergoes glucose-mediated co-secretion with insulin, and acts as a physiological amplifier of glucose-mediated insulin secretion. Exhibits osteogenic properties by increasing osteoblast mitogenic activity through phosphoactivation of MAPK1 and MAPK3. In Mus musculus (Mouse), this protein is Insulin-like growth factor 2.